The following is a 412-amino-acid chain: MQFFNFLLFYPVFMSIYWIVGSIYFYFTREIRYSLNKKPDINVDELEGITFLLACYNESDTIEDTLSNVLALKYEKKEIIIINDGSSDNTAELIYKIKENNDFIFVDLQENRGKANALNQGIKQASYDYVMCLDADTIVDQDAPYYMIENFKHDPKLGAVTGNPRIRNKSSILGKIQTIEYASLIGCIKRSQTLAGAVNTISGVFTLFKKSAVVDVGYWDTDMITEDIAVSWKLHLRGYRIKYEPLAMCWMLVPETLGGLWKQRVRWAQGGHEVLLRDFFSTMKTKRFPLYILMFEQIISILWVYIVLLYLGYLFITANFLDYTFMTYSFSIFLLSSFTMTFINVIQFTVALFIDSRYEKKNMAGLIFVSWYPTVYWIINAAVVLVAFPKALKRKKGGYATWSSPDRGNTQR.

The next 4 helical transmembrane spans lie at 6–28 (FLLF…FYFT), 290–312 (LYIL…LYLG), 332–354 (IFLL…ALFI), and 366–388 (LIFV…LVAF).

The protein belongs to the glycosyltransferase 2 family.

It localises to the cell membrane. Functionally, N-acetylglucosaminyltransferase that catalyzes the polymerization of single monomer units of UDP-N-acetylglucosamine to produce the linear homomer poly-beta-1,6-N-acetyl-D-glucosamine (PNAG, also referred to as PIA), a biofilm adhesin polysaccharide. Requires IcaD for full activity. This chain is Poly-beta-1,6-N-acetyl-D-glucosamine synthase (icaA), found in Staphylococcus aureus (strain MSSA476).